Here is a 115-residue protein sequence, read N- to C-terminus: Large ribosomal subunit protein bL20 (115 aa).

The protein belongs to the bacterial ribosomal protein bL20 family.

Its function is as follows. Binds directly to 23S ribosomal RNA and is necessary for the in vitro assembly process of the 50S ribosomal subunit. It is not involved in the protein synthesizing functions of that subunit. The polypeptide is Large ribosomal subunit protein bL20 (Chlorobium luteolum (strain DSM 273 / BCRC 81028 / 2530) (Pelodictyon luteolum)).